Consider the following 105-residue polypeptide: Putative toxin MazF8 (105 aa).

In terms of assembly, forms a complex with cognate antitoxin MazE8.

Its function is as follows. Putative toxic component of a type II toxin-antitoxin (TA) system. Acts as an endoribonuclease. Neutralized by coexpression with cognate antitoxin MazE8. This is Putative toxin MazF8 (mazF8) from Mycobacterium tuberculosis (strain CDC 1551 / Oshkosh).